The following is a 1084-amino-acid chain: Cellulose synthase A catalytic subunit 6 [UDP-forming] (1084 aa).

Met1 bears the N-acetylmethionine mark. Residues 1 to 277 (MNTGGRLIAG…KSSKINPYRM (277 aa)) are Cytoplasmic-facing. Cys39, Cys42, Cys58, Cys61, Cys66, Cys69, Cys81, and Cys84 together coordinate Zn(2+). Residues 39 to 85 (CQICRDEIELTVDGEPFVACNECAFPVCRPCYEYERREGNQACPQCK) form an RING-type; degenerate zinc finger. The helical transmembrane segment at 278–298 (LIVLRLVILGLFFHYRILHPV) threads the bilayer. At 299–300 (KD) the chain is on the extracellular side. The helical transmembrane segment at 301–321 (AYALWLISVICEIWFAVSWVL) threads the bilayer. Residues 322 to 868 (DQFPKWYPIE…INSVVYPWTS (547 aa)) lie on the Cytoplasmic side of the membrane. 4 residues coordinate UDP-alpha-D-glucose: Ser360, Lys366, Glu367, and Asp396. The active site involves Asp396. Residues 450 to 476 (VRERRAMKRDYEEFKVKINALVATAQK) are a coiled coil. Lys537 is a binding site for UDP-alpha-D-glucose. Mn(2+)-binding residues include Lys538 and Asp562. Residues 675-703 (RKAKTVAADKKKKNREASKQIHALENIEE) adopt a coiled-coil conformation. Asp785 is a catalytic residue. The chain crosses the membrane as a helical span at residues 869-889 (LPLIVYCSLPAICLLTGKFIV). At 890–894 (PEISN) the chain is on the extracellular side. A helical transmembrane segment spans residues 895–915 (YASILFMALFSSIAITGILEM). Residues 916–930 (QWGKVGIDDWWRNEQ) lie on the Cytoplasmic side of the membrane. Residues 931–951 (FWVIGGVSAHLFALFQGLLKV) traverse the membrane as a helical segment. Residues 952-980 (LAGVDTNFTVTSKAADDGEFSDLYLFKWT) lie on the Extracellular side of the membrane. Residue Asn958 is glycosylated (N-linked (GlcNAc...) asparagine). The chain crosses the membrane as a helical span at residues 981–1001 (SLLIPPMTLLIINVIGVIVGV). Residues 1002 to 1012 (SDAISNGYDSW) lie on the Cytoplasmic side of the membrane. A helical membrane pass occupies residues 1013 to 1033 (GPLFGRLFFALWVIIHLYPFL). The Extracellular portion of the chain corresponds to 1034 to 1042 (KGLLGKQDR). Residues 1043 to 1063 (MPTIIVVWSILLASILTLLWV) form a helical membrane-spanning segment. Over 1064-1084 (RVNPFVAKGGPILEICGLDCL) the chain is Cytoplasmic.

This sequence belongs to the glycosyltransferase 2 family. Plant cellulose synthase subfamily. As to quaternary structure, interacts with CESA1 and CESA3. Interacts with STL1 and STL2, but not with GOT1. Binds to CSI1 and CSI3. Interacts with PAT24/TIP1. Zn(2+) serves as cofactor. Requires Mn(2+) as cofactor. In terms of processing, S-acylated. Expressed in germinating seeds, seedlings, roots, stems, leaves and flowers. Not present in mature flowers.

It is found in the cell membrane. The enzyme catalyses [(1-&gt;4)-beta-D-glucosyl](n) + UDP-alpha-D-glucose = [(1-&gt;4)-beta-D-glucosyl](n+1) + UDP + H(+). The protein operates within glycan metabolism; plant cellulose biosynthesis. Catalytic subunit of cellulose synthase terminal complexes ('rosettes'), required for beta-1,4-glucan microfibril crystallization, a major mechanism of the cell wall formation. Involved in the primary cell wall formation. The presence of each protein CESA1 and CESA6 is critical for cell expansion. The hypocotyl elongation is based on a CESA6-dependent cell elongation in dark and a CESA6-independent cell elongation in light. The transition between these two mechanisms requires photosynthesis and PHYB, but not CRY1. The CESA6-dependent cell elongation seems to be independent of gibberellic acid, auxin and ethylene. May be involved in sensitivity to isoxaben. Associates with and moves along cortical microtubules for the process of cellulose deposition. The chain is Cellulose synthase A catalytic subunit 6 [UDP-forming] from Arabidopsis thaliana (Mouse-ear cress).